Reading from the N-terminus, the 496-residue chain is Glycerol kinase (496 aa).

Thr12 is a binding site for ADP. ATP-binding residues include Thr12, Thr13, and Ser14. A sn-glycerol 3-phosphate-binding site is contributed by Thr12. An ADP-binding site is contributed by Arg16. Sn-glycerol 3-phosphate-binding residues include Arg82, Glu83, and Tyr134. The glycerol site is built by Arg82, Glu83, and Tyr134. His230 is modified (phosphohistidine; by HPr). Residue Asp244 coordinates sn-glycerol 3-phosphate. Glycerol contacts are provided by Asp244 and Gln245. 2 residues coordinate ADP: Thr266 and Gly309. Positions 266, 309, 313, and 410 each coordinate ATP. Residues Gly410 and Asn414 each coordinate ADP.

It belongs to the FGGY kinase family. As to quaternary structure, homotetramer and homodimer (in equilibrium). In terms of processing, the phosphoenolpyruvate-dependent sugar phosphotransferase system (PTS), including enzyme I, and histidine-containing protein (HPr) are required for the phosphorylation, which leads to the activation of the enzyme.

The enzyme catalyses glycerol + ATP = sn-glycerol 3-phosphate + ADP + H(+). The protein operates within polyol metabolism; glycerol degradation via glycerol kinase pathway; sn-glycerol 3-phosphate from glycerol: step 1/1. Activated by phosphorylation and inhibited by fructose 1,6-bisphosphate (FBP). Functionally, key enzyme in the regulation of glycerol uptake and metabolism. Catalyzes the phosphorylation of glycerol to yield sn-glycerol 3-phosphate. This Geobacillus sp. (strain WCH70) protein is Glycerol kinase.